We begin with the raw amino-acid sequence, 302 residues long: Tegument protein VP22 (302 aa).

The span at 1–10 (MASSDGDRLC) shows a compositional bias: basic and acidic residues. Disordered stretches follow at residues 1–42 (MASS…PDDS) and 125–170 (SFTK…SSWC). The segment at 154-244 (RPISFSTAPK…ANEADLGEGA (91 aa)) is interaction with gE. A compositionally biased stretch (polar residues) spans 157–170 (SFSTAPKTATSSWC). The Nuclear export signal signature appears at 212–224 (LDRLLTGAVIRIT). The tract at residues 243–302 (GASVSKRGHNRKTGDLQGGMGNEPMYAQVRKPKSRTDTQTTGRITNRSRARSASRTDTRK) is disordered.

It belongs to the alphaherpesvirinae VP22 tegument protein family. Interacts with gE (via C-terminus); this interaction is necessary for the recruitment of VP22/ORF9 to the Golgi and its packaging into virions. Interacts with gM (via C-terminus). Interacts with VP16/ORF10; this interaction allows the formation of a tripartite complex composed of VP16/ORF10, VP22/ORF9 and VHS/ORF17. Interacts with the capsid-binding protein ORF44. Interacts with host CGAS. Post-translationally, highly phosphorylated in the host cell. Packaging is selective for underphosphorylated forms.

It is found in the virion tegument. The protein localises to the host cytoplasm. Its subcellular location is the host nucleus. It localises to the host Golgi apparatus. Functionally, tegument protein that plays different roles during the time course of infection. Participates in both the accumulation of viral mRNAs and viral protein translation at late time of infection. Modulates the RNase activity of the virion host shutoff protein ORF17 probably to ensure necessary levels of key cellular mRNAs and proteins. Plays a role in microtubule reorganization that occurs after viral infection by stabilizing microtubule network. Plays a role in the inhibition of host innate immune system by targeting the CGAS enzymatic activity which is the principal cytosolic DNA sensor that detects invading viral DNA. Acts by mediating disruption of liquid-like droplets in which CGAS is activated, thereby preventing CGAS activity. The sequence is that of Tegument protein VP22 from Homo sapiens (Human).